We begin with the raw amino-acid sequence, 108 residues long: Small ribosomal subunit protein eS25x (108 aa).

The interval 1–36 is disordered; the sequence is MAPKKDKVPPPSSKPAKSGGGKQKKKKWSKGKQKEK. The span at 22 to 31 shows a compositional bias: basic residues; that stretch reads KQKKKKWSKG.

It belongs to the eukaryotic ribosomal protein eS25 family.

The protein is Small ribosomal subunit protein eS25x (RPS25D) of Arabidopsis thaliana (Mouse-ear cress).